A 217-amino-acid chain; its full sequence is Thiosulfate dehydrogenase electron acceptor (217 aa).

Positions 1–28 (MRQFIPMRRVLAVATLGALFWAAPASWA) are cleaved as a signal peptide. Cytochrome c domains follow at residues 29–104 (AAPP…SKLK) and 116–206 (AAAA…AAQP). Heme c contacts are provided by Cys-37, Cys-40, His-41, Cys-137, Cys-140, and His-141.

Post-translationally, binds 2 heme c groups covalently per subunit.

In terms of biological role, acts as an electron acceptor for the thiosulfate dehydrogenase TsdA. In Thiomonas intermedia (strain K12) (Thiobacillus intermedius), this protein is Thiosulfate dehydrogenase electron acceptor (tsdB).